The following is a 221-amino-acid chain: PKHD-type hydroxylase PMT_0286 (221 aa).

One can recognise a Fe2OG dioxygenase domain in the interval 80–174 (HIHGVMFSRS…RLVCVGWIQS (95 aa)). Positions 98, 100, and 155 each coordinate Fe cation. Arg-165 lines the 2-oxoglutarate pocket.

Requires Fe(2+) as cofactor. The cofactor is L-ascorbate.

This chain is PKHD-type hydroxylase PMT_0286, found in Prochlorococcus marinus (strain MIT 9313).